The chain runs to 1030 residues: FACT complex subunit spt-16 (1030 aa).

The stretch at 424 to 445 (RLKSNVIKFKEEQENREAEKDN) forms a coiled coil. Composition is skewed to basic and acidic residues over residues 435–449 (EQEN…DQKK) and 464–477 (TRNK…RKER). Disordered stretches follow at residues 435–477 (EQEN…RKER) and 491–514 (ARLS…SYKT). Positions 623–645 (RLIKEMQKRFKTEEAEEREKEGA) form a coiled coil. Residues 927–1030 (VESDNEEAMD…KSGPSHKRRK (104 aa)) form a disordered region. Composition is skewed to acidic residues over residues 929 to 951 (SDNE…EEDA) and 958 to 983 (ESDE…DSDE). A coiled-coil region spans residues 987–1007 (KDWSDLEEEAANADKRREVEE). A compositionally biased stretch (basic and acidic residues) spans 998–1014 (NADKRREVEEPSRDRDR). Residues 1015–1030 (KRPHSSKSGPSHKRRK) are compositionally biased toward basic residues.

This sequence belongs to the peptidase M24 family. SPT16 subfamily. Component of the FACT complex, a stable heterodimer of spt-16 and hmg-3 or hmg-4. Expressed in the germline and somatic cells.

The protein localises to the nucleus. Its subcellular location is the chromosome. Functionally, component of the FACT complex, a general chromatin factor that acts to reorganize nucleosomes. The FACT complex is involved in multiple processes that require DNA as a template such as mRNA elongation, DNA replication and DNA repair. During transcription elongation the FACT complex acts as a histone chaperone that both destabilizes and restores nucleosomal structure. It facilitates the passage of RNA polymerase II and transcription by promoting the dissociation of one histone H2A-H2B dimer from the nucleosome, then subsequently promotes the reestablishment of the nucleosome following the passage of RNA polymerase II. In embryos, promotes cell cycle progression and chromosomal segregation. Plays a role in the development of the anterior pharynx during embryonic development. The polypeptide is FACT complex subunit spt-16 (Caenorhabditis elegans).